A 295-amino-acid polypeptide reads, in one-letter code: Diaminopimelate epimerase (295 aa).

Residues Asn-11 and Asn-78 each contribute to the substrate site. The active-site Proton donor is Cys-87. Residues 88-89 (GN), Asn-163, Asn-199, and 220-221 (ER) each bind substrate. Cys-229 functions as the Proton acceptor in the catalytic mechanism. Residue 230-231 (GT) coordinates substrate.

It belongs to the diaminopimelate epimerase family. Homodimer.

The protein localises to the cytoplasm. It carries out the reaction (2S,6S)-2,6-diaminopimelate = meso-2,6-diaminopimelate. Its pathway is amino-acid biosynthesis; L-lysine biosynthesis via DAP pathway; DL-2,6-diaminopimelate from LL-2,6-diaminopimelate: step 1/1. In terms of biological role, catalyzes the stereoinversion of LL-2,6-diaminopimelate (L,L-DAP) to meso-diaminopimelate (meso-DAP), a precursor of L-lysine and an essential component of the bacterial peptidoglycan. This chain is Diaminopimelate epimerase, found in Mycobacteroides abscessus (strain ATCC 19977 / DSM 44196 / CCUG 20993 / CIP 104536 / JCM 13569 / NCTC 13031 / TMC 1543 / L948) (Mycobacterium abscessus).